The chain runs to 202 residues: Diadenylate cyclase (202 aa).

Residues 6 to 26 (VFSVIILVLLFLILALTLLFV) form a helical membrane-spanning segment. Residues 29–185 (NKRTRSFVIR…RGVIKTLSSN (157 aa)) form the DAC domain.

Belongs to the adenylate cyclase family. DacB/CdaS subfamily. As to quaternary structure, probably oligomerizes.

It localises to the cell membrane. It carries out the reaction 2 ATP = 3',3'-c-di-AMP + 2 diphosphate. Its function is as follows. Catalyzes the condensation of 2 ATP molecules into cyclic di-AMP (c-di-AMP), a second messenger used to regulate differing processes in different bacteria. The sequence is that of Diadenylate cyclase from Mycoplasma pneumoniae (strain ATCC 29342 / M129 / Subtype 1) (Mycoplasmoides pneumoniae).